The following is a 227-amino-acid chain: Probable septum site-determining protein MinC (227 aa).

Belongs to the MinC family. As to quaternary structure, interacts with MinD and FtsZ.

Its function is as follows. Cell division inhibitor that blocks the formation of polar Z ring septums. Rapidly oscillates between the poles of the cell to destabilize FtsZ filaments that have formed before they mature into polar Z rings. Prevents FtsZ polymerization. The chain is Probable septum site-determining protein MinC from Geobacillus thermodenitrificans (strain NG80-2).